The sequence spans 452 residues: Exodeoxyribonuclease 7 large subunit (452 aa).

This sequence belongs to the XseA family. In terms of assembly, heterooligomer composed of large and small subunits.

The protein resides in the cytoplasm. It catalyses the reaction Exonucleolytic cleavage in either 5'- to 3'- or 3'- to 5'-direction to yield nucleoside 5'-phosphates.. In terms of biological role, bidirectionally degrades single-stranded DNA into large acid-insoluble oligonucleotides, which are then degraded further into small acid-soluble oligonucleotides. The protein is Exodeoxyribonuclease 7 large subunit of Bacillus cereus (strain ATCC 10987 / NRS 248).